Reading from the N-terminus, the 430-residue chain is Acylsugar acyltransferase 3 (430 aa).

Residues His-155 and Asp-367 each act as proton acceptor in the active site.

This sequence belongs to the plant acyltransferase family. As to quaternary structure, monomer. Expressed in tip cells of type I trichomes of stems and petioles, sites of acylsugars production.

In terms of biological role, catalyzes the transfer of short (four to five carbons) branched acyl chains to the furanose ring of di-acylsucrose acceptors to produce tri-acylsucroses such as S3:15 (5,5,5), S4:17 (2,5,5,5) and S4:24 (2,5,5,12) acylsucroses. In Solanum lycopersicum (Tomato), this protein is Acylsugar acyltransferase 3.